A 186-amino-acid polypeptide reads, in one-letter code: Ribosome-recycling factor (186 aa).

The protein belongs to the RRF family.

It is found in the cytoplasm. Responsible for the release of ribosomes from messenger RNA at the termination of protein biosynthesis. May increase the efficiency of translation by recycling ribosomes from one round of translation to another. This is Ribosome-recycling factor from Polaromonas sp. (strain JS666 / ATCC BAA-500).